We begin with the raw amino-acid sequence, 355 residues long: MPRTISLAVVPGDGIGPEVVHEALRVLREAVPADVSLDTTQYPFGAGHFLETGEILTDSDLAALAQHDAILLGAVGGDPRDARLAGGIIERGLLLKLRFAFDHYINLRPTTLLPGVTSPLASPGEVDFVVVREGTEGPYAGNGGVLRRGTEHEIATEVSVNTAHGVERTVRFAFDLASKRERKRVTLVHKTNVLTFAGSLWQRTVDRVAAEHPDVAVDYLHVDATMIFLVTDPSRFDVIVSDNLFGDIITDLAAAISGGIGLAASGNVNPTGAFPSMFEPVHGSAPDIAGQQKADPTAAILSVSLLLDHLGLPEAAARVTAAVSADLAARAAGDPAPRSTAEVGDAVIRALSTNH.

The substrate site is built by arginine 98, arginine 108, arginine 132, and aspartate 223. Residues aspartate 223, aspartate 247, and aspartate 251 each coordinate Mg(2+). Position 283-295 (283-295) interacts with NAD(+); it reads GSAPDIAGQQKAD.

This sequence belongs to the isocitrate and isopropylmalate dehydrogenases family. LeuB type 2 subfamily. In terms of assembly, homodimer. Requires Mg(2+) as cofactor. The cofactor is Mn(2+).

It localises to the cytoplasm. The enzyme catalyses (2R,3S)-3-isopropylmalate + NAD(+) = 4-methyl-2-oxopentanoate + CO2 + NADH. Its pathway is amino-acid biosynthesis; L-leucine biosynthesis; L-leucine from 3-methyl-2-oxobutanoate: step 3/4. In terms of biological role, catalyzes the oxidation of 3-carboxy-2-hydroxy-4-methylpentanoate (3-isopropylmalate) to 3-carboxy-4-methyl-2-oxopentanoate. The product decarboxylates to 4-methyl-2 oxopentanoate. The polypeptide is 3-isopropylmalate dehydrogenase (Clavibacter michiganensis subsp. michiganensis (strain NCPPB 382)).